The chain runs to 444 residues: CCA-adding enzyme (444 aa).

Residues Ser57 and Arg60 each coordinate ATP. Positions 57 and 60 each coordinate CTP. Asp69, Asp71, and Asp124 together coordinate Mg(2+). ATP-binding residues include His147, Lys168, and Tyr177. The CTP site is built by His147, Lys168, and Tyr177.

Belongs to the tRNA nucleotidyltransferase/poly(A) polymerase family. Archaeal CCA-adding enzyme subfamily. Homodimer. The cofactor is Mg(2+).

It carries out the reaction a tRNA precursor + 2 CTP + ATP = a tRNA with a 3' CCA end + 3 diphosphate. The enzyme catalyses a tRNA with a 3' CCA end + 2 CTP + ATP = a tRNA with a 3' CCACCA end + 3 diphosphate. Functionally, catalyzes the addition and repair of the essential 3'-terminal CCA sequence in tRNAs without using a nucleic acid template. Adds these three nucleotides in the order of C, C, and A to the tRNA nucleotide-73, using CTP and ATP as substrates and producing inorganic pyrophosphate. tRNA 3'-terminal CCA addition is required both for tRNA processing and repair. Also involved in tRNA surveillance by mediating tandem CCA addition to generate a CCACCA at the 3' terminus of unstable tRNAs. While stable tRNAs receive only 3'-terminal CCA, unstable tRNAs are marked with CCACCA and rapidly degraded. This Methanococcus maripaludis (strain C7 / ATCC BAA-1331) protein is CCA-adding enzyme.